Consider the following 415-residue polypeptide: Serine hydroxymethyltransferase (415 aa).

Residues Leu117 and 121–123 each bind (6S)-5,6,7,8-tetrahydrofolate; that span reads GHL. Lys226 is subject to N6-(pyridoxal phosphate)lysine. Residues Glu241 and 349-351 each bind (6S)-5,6,7,8-tetrahydrofolate; that span reads SPF.

Belongs to the SHMT family. Homodimer. Pyridoxal 5'-phosphate is required as a cofactor.

The protein localises to the cytoplasm. The catalysed reaction is (6R)-5,10-methylene-5,6,7,8-tetrahydrofolate + glycine + H2O = (6S)-5,6,7,8-tetrahydrofolate + L-serine. The protein operates within one-carbon metabolism; tetrahydrofolate interconversion. Its pathway is amino-acid biosynthesis; glycine biosynthesis; glycine from L-serine: step 1/1. Its function is as follows. Catalyzes the reversible interconversion of serine and glycine with tetrahydrofolate (THF) serving as the one-carbon carrier. This reaction serves as the major source of one-carbon groups required for the biosynthesis of purines, thymidylate, methionine, and other important biomolecules. Also exhibits THF-independent aldolase activity toward beta-hydroxyamino acids, producing glycine and aldehydes, via a retro-aldol mechanism. This chain is Serine hydroxymethyltransferase, found in Geobacter sulfurreducens (strain ATCC 51573 / DSM 12127 / PCA).